A 314-amino-acid chain; its full sequence is Serine acetyltransferase 1, chloroplastic (314 aa).

Belongs to the transferase hexapeptide repeat family. As to quaternary structure, homomultimer. Interacts with OASA1 and CYP20-3. Component of the cysteine synthase complex (CSC) composed of two OAS-TL dimers and one SAT hexamer. Mostly expressed in leaves. Localized in cortex, trichomes and vascular tissues, particularly in phloem.

It localises to the plastid. It is found in the chloroplast. Its subcellular location is the cytoplasm. The catalysed reaction is L-serine + acetyl-CoA = O-acetyl-L-serine + CoA. Its pathway is amino-acid biosynthesis; L-cysteine biosynthesis; L-cysteine from L-serine: step 1/2. Functionally, serine acetyltransferase which catalyzes the formation of O-acetyl-L-serine from acetyl-CoA and L-serine. Also displays O-acetylserine (thio1)-lyase activity in vitro. May be involved in detoxification process by mediating the production of glutathione. The protein is Serine acetyltransferase 1, chloroplastic (SAT1) of Arabidopsis thaliana (Mouse-ear cress).